Reading from the N-terminus, the 105-residue chain is Ferredoxin--nitrite reductase, chloroplastic (105 aa).

C28 and C32 together coordinate [4Fe-4S] cluster. C32 contributes to the siroheme binding site.

It belongs to the nitrite and sulfite reductase 4Fe-4S domain family. As to quaternary structure, monomer. It depends on siroheme as a cofactor. [4Fe-4S] cluster is required as a cofactor. Highest expression in roots and hypocotyls. Some expression in cotyledonary whorls.

The protein resides in the plastid. Its subcellular location is the chloroplast. It catalyses the reaction 6 oxidized [2Fe-2S]-[ferredoxin] + NH4(+) + 2 H2O = nitrite + 6 reduced [2Fe-2S]-[ferredoxin] + 8 H(+). The protein operates within nitrogen metabolism; nitrate reduction (assimilation). The chain is Ferredoxin--nitrite reductase, chloroplastic (NIR) from Pinus sylvestris (Scotch pine).